The primary structure comprises 491 residues: Probable succinate-semialdehyde dehydrogenase [NADP(+)] (491 aa).

NADP(+)-binding positions include 163–164 (WN), 187–190 (KPAE), and 241–242 (GS). The Proton acceptor role is filled by Glu-263. An NADP(+)-binding site is contributed by Leu-264. The active-site Nucleophile is Cys-297. Glu-394 is a binding site for NADP(+).

It belongs to the aldehyde dehydrogenase family.

It catalyses the reaction succinate semialdehyde + NADP(+) + H2O = succinate + NADPH + 2 H(+). Its pathway is amino-acid degradation; 4-aminobutanoate degradation. Functionally, catalyzes the NADP(+) dependent oxidation of succinate semialdehyde to succinate. This is Probable succinate-semialdehyde dehydrogenase [NADP(+)] (gabD) from Sinorhizobium fredii (strain NBRC 101917 / NGR234).